The following is a 249-amino-acid chain: Cell division protein FtsQ (249 aa).

At 1–6 (MKFILF) the chain is on the cytoplasmic side. The helical transmembrane segment at 7-23 (ALLVSAGSWYGWKQLHS) threads the bilayer. Over 24–249 (QDAVSKPIRY…YKNVMKERRI (226 aa)) the chain is Periplasmic. Positions 29–98 (KPIRYVKIEG…DAVHIKITEQ (70 aa)) constitute a POTRA domain.

Belongs to the FtsQ/DivIB family. FtsQ subfamily. In terms of assembly, part of a complex composed of FtsB, FtsL and FtsQ.

It is found in the cell inner membrane. Functionally, essential cell division protein. May link together the upstream cell division proteins, which are predominantly cytoplasmic, with the downstream cell division proteins, which are predominantly periplasmic. May control correct divisome assembly. This chain is Cell division protein FtsQ, found in Methylomonas methanica (strain DSM 25384 / MC09).